Reading from the N-terminus, the 158-residue chain is MLLLDCNPEVDSLKHLLETGASVNAPPDPCEQSPVHLAAGGGLACFLLWQLQTGADLNQQDVFGEAPLHKAARVGSMECLSLLVASDAQIDLCNKNGQTAEDLAWSCGFPECAKFLTTIKCMQTIKSREQPNKDHCVQVLRLKRSFGSEEYTSGKRKC.

ANK repeat units lie at residues 1–25 (MLLL…SVNA), 30–59 (CEQS…DLNQ), and 63–92 (FGEA…QIDL). Positions 129-149 (EQPNKDHCVQVLRLKRSFGSE) match the Nuclear localization signal motif.

In terms of processing, ubiquitinated by the CRL2(FEM1B) complex, leading to its degradation.

It localises to the nucleus. The protein resides in the cytoplasm. The sequence is that of Ankyrin repeat domain-containing protein 37 (ANKRD37) from Bos taurus (Bovine).